The primary structure comprises 347 residues: Phenylalanine--tRNA ligase alpha subunit (347 aa).

Residue Glu-261 coordinates Mg(2+).

This sequence belongs to the class-II aminoacyl-tRNA synthetase family. Phe-tRNA synthetase alpha subunit type 1 subfamily. Tetramer of two alpha and two beta subunits. Requires Mg(2+) as cofactor.

It localises to the cytoplasm. It carries out the reaction tRNA(Phe) + L-phenylalanine + ATP = L-phenylalanyl-tRNA(Phe) + AMP + diphosphate + H(+). This is Phenylalanine--tRNA ligase alpha subunit from Streptococcus pyogenes serotype M3 (strain ATCC BAA-595 / MGAS315).